Consider the following 603-residue polypeptide: Terpenoid synthase 25 (603 aa).

Mg(2+) contacts are provided by Asp-356, Asp-360, Asn-500, Thr-504, and Glu-508. The short motif at 356–360 (DDTCD) is the DDXXD motif element.

Belongs to the terpene synthase family. Tpsa subfamily. It depends on Mg(2+) as a cofactor. Mn(2+) serves as cofactor. As to expression, predominantly expressed in roots but also in flowers.

The protein resides in the cytoplasm. The protein operates within secondary metabolite biosynthesis; terpenoid biosynthesis. Involved in terpene biosynthesis in roots. Possesses sesquiterpene (C15) synthase activity in vitro. Does not seem to be involved in diterpene (C20) biosynthesis. The protein is Terpenoid synthase 25 of Arabidopsis thaliana (Mouse-ear cress).